Reading from the N-terminus, the 206-residue chain is Urease accessory protein UreE (206 aa).

Residues 136 to 206 (PEGGAYAEPS…HGHAHAHDRK (71 aa)) form a disordered region. Basic and acidic residues-rich tracts occupy residues 148–169 (QGHD…GGHE) and 177–191 (HGHA…EHCG). Over residues 192–206 (HGHHHHGHAHAHDRK) the composition is skewed to basic residues.

Belongs to the UreE family.

It localises to the cytoplasm. Its function is as follows. Involved in urease metallocenter assembly. Binds nickel. Probably functions as a nickel donor during metallocenter assembly. In Bradyrhizobium sp. (strain BTAi1 / ATCC BAA-1182), this protein is Urease accessory protein UreE.